We begin with the raw amino-acid sequence, 454 residues long: tRNA modification GTPase MnmE (454 aa).

(6S)-5-formyl-5,6,7,8-tetrahydrofolate contacts are provided by R23, E80, and K120. A TrmE-type G domain is found at 216–377 (GMKVVIAGRP…LRDHLKSSMG (162 aa)). Position 226 (N226) interacts with K(+). Residues 226–231 (NAGKSS), 245–251 (TDIAGTT), 270–273 (DTAG), 335–338 (NKAD), and 358–360 (SAR) contribute to the GTP site. S230 lines the Mg(2+) pocket. Residues T245, I247, and T250 each contribute to the K(+) site. T251 contacts Mg(2+). K454 provides a ligand contact to (6S)-5-formyl-5,6,7,8-tetrahydrofolate.

Belongs to the TRAFAC class TrmE-Era-EngA-EngB-Septin-like GTPase superfamily. TrmE GTPase family. In terms of assembly, homodimer. Heterotetramer of two MnmE and two MnmG subunits. The cofactor is K(+).

It is found in the cytoplasm. In terms of biological role, exhibits a very high intrinsic GTPase hydrolysis rate. Involved in the addition of a carboxymethylaminomethyl (cmnm) group at the wobble position (U34) of certain tRNAs, forming tRNA-cmnm(5)s(2)U34. The chain is tRNA modification GTPase MnmE from Erwinia tasmaniensis (strain DSM 17950 / CFBP 7177 / CIP 109463 / NCPPB 4357 / Et1/99).